The primary structure comprises 471 residues: Kynurenine 3-monooxygenase (471 aa).

Residues Val-19, 37 to 40, and Ala-57 each bind FAD; that span reads YESR. The L-kynurenine site is built by Arg-85 and Tyr-99. Residues Arg-111, Leu-136, Thr-172, Asp-304, and 317-318 each bind FAD; that span reads MN. L-kynurenine is bound by residues Asn-363 and Tyr-398. The next 2 membrane-spanning stretches (helical) occupy residues 385–404 and 425–445; these read CLHTLMPSTFIPLYTMVTFS and ALFFFGTLVALSTTYLLTGPT.

It belongs to the aromatic-ring hydroxylase family. KMO subfamily. Requires FAD as cofactor.

The protein resides in the mitochondrion outer membrane. It carries out the reaction L-kynurenine + NADPH + O2 + H(+) = 3-hydroxy-L-kynurenine + NADP(+) + H2O. Its pathway is cofactor biosynthesis; NAD(+) biosynthesis; quinolinate from L-kynurenine: step 1/3. Functionally, catalyzes the hydroxylation of L-kynurenine (L-Kyn) to form 3-hydroxy-L-kynurenine (L-3OHKyn). Required for synthesis of quinolinic acid, a neurotoxic NMDA receptor antagonist and potential endogenous inhibitor of NMDA receptor signaling in axonal targeting, synaptogenesis and apoptosis during brain development. Quinolinic acid may also affect NMDA receptor signaling in pancreatic beta cells, osteoblasts, myocardial cells, and the gastrointestinal tract. The polypeptide is Kynurenine 3-monooxygenase (Sus scrofa (Pig)).